A 522-amino-acid polypeptide reads, in one-letter code: Protein disulfide-isomerase (522 aa).

The or 22 signal peptide spans 1 to 28 (MKFSAGAVLSWSSLLLASSVFAQQEAVA). Positions 29–141 (PEDSAVVKLA…VQFMIKQSQP (113 aa)) constitute a Thioredoxin 1 domain. Active-site nucleophile residues include C61 and C64. A disulfide bridge links C61 with C64. N82, N117, N155, and N174 each carry an N-linked (GlcNAc...) asparagine glycan. Residues 356 to 485 (FLKGDASPIV…LFDFIKENGH (130 aa)) form the Thioredoxin 2 domain. Catalysis depends on nucleophile residues C406 and C409. A disulfide bridge links C406 with C409. N425 is a glycosylation site (N-linked (GlcNAc...) asparagine). Residues 497 to 522 (AQEKAAEEADADAELADEEDAIHDEL) form a disordered region. Residues 504–522 (EADADAELADEEDAIHDEL) are compositionally biased toward acidic residues. The short motif at 519 to 522 (HDEL) is the Prevents secretion from ER element.

Belongs to the protein disulfide isomerase family. In terms of assembly, interacts with EPS1, KAR2 and MNL1. Post-translationally, the N-terminus is blocked.

Its subcellular location is the endoplasmic reticulum lumen. The enzyme catalyses Catalyzes the rearrangement of -S-S- bonds in proteins.. In terms of biological role, protein disulfide isomerase of ER lumen required for formation of disulfide bonds in secretory and cell-surface proteins and which unscrambles non-native disulfide bonds. Forms a complex with MNL1 to process unfolded protein-bound Man8GlcNAc2 oligosaccharides to Man7GlcNAc2, promoting degradation in unfolded protein response. This is Protein disulfide-isomerase (PDI1) from Saccharomyces cerevisiae (strain ATCC 204508 / S288c) (Baker's yeast).